Consider the following 331-residue polypeptide: 6-phosphogluconolactonase (331 aa).

This sequence belongs to the cycloisomerase 2 family.

The enzyme catalyses 6-phospho-D-glucono-1,5-lactone + H2O = 6-phospho-D-gluconate + H(+). It participates in carbohydrate degradation; pentose phosphate pathway; D-ribulose 5-phosphate from D-glucose 6-phosphate (oxidative stage): step 2/3. Functionally, catalyzes the hydrolysis of 6-phosphogluconolactone to 6-phosphogluconate. This chain is 6-phosphogluconolactonase, found in Salmonella paratyphi B (strain ATCC BAA-1250 / SPB7).